The primary structure comprises 655 residues: Protein nipi-3 (655 aa).

The segment at 1-35 (MARTKCKTKTVANPRTGVRKTAKDLSEPVRQDAVS) is disordered. Positions 21–35 (TAKDLSEPVRQDAVS) are enriched in basic and acidic residues. Positions 200 to 470 (IGIFVIYGTG…NQVNGDFPEI (271 aa)) constitute a Protein kinase domain. Residues 206-214 (YGTGLVTRA) and lysine 235 contribute to the ATP site.

It belongs to the protein kinase superfamily. CAMK Ser/Thr protein kinase family. As to quaternary structure, may interact with transcription factor cebp-1 (via N-terminus). As to expression, expressed in epidermis, pharynx, intestine, a subset of head neurons and motoneurons.

The protein resides in the nucleus. Functionally, adapter protein that regulates different signaling pathways. Required for larval development and viability. Involved in negatively modulating pmk-1 p38/MAPK signaling. Involved in innate immunity, acting either in a manner dependent upon, or independent of, the pmk-1 or pmk-3 p38/MAPK pathways. Has a protective role in response to infection by the Gram-negative bacterium P.aeruginosa, acting by negatively modulating expression of cebp-1, and regulating the pmk-1 p38/MAPK pathway, leading to activation of transcription factor skn-1. Required to prevent P.aeruginosa toxin ToxA-mediated lethality, probably acting via modulating the effects of translational inhibition caused by the toxin. By regulating the up-regulation in the epidermis of antimicrobial peptides nlp-29 and nlp-31, plays a role in resistance to fungal infection. The sequence is that of Protein nipi-3 from Caenorhabditis elegans.